A 385-amino-acid chain; its full sequence is Sesquiterpene alcohol synthase (385 aa).

Aspartate 123 and aspartate 127 together coordinate Mg(2+). Positions 123–127 (DDISD) match the DDXXD motif motif.

Belongs to the terpene synthase family. Mg(2+) is required as a cofactor. As to expression, specifically expressed in tissues lining the cuticle of the abdominal sternites of mature males.

The enzyme catalyses (2E,6E)-farnesyl diphosphate + H2O = (1S,6S,7R)-sesquipiperitol + diphosphate. It participates in pheromone biosynthesis. Its function is as follows. Sesquiterpene alcohol synthase that catalyzes the formation of (1S,6S,7R)-sesquipiperitol, a terpene intermediate in murgantiol biosynthesis, a male-released aggregation pheromone. This Murgantia histrionica (Harlequin bug) protein is Sesquiterpene alcohol synthase.